We begin with the raw amino-acid sequence, 1003 residues long: Phosphoenolpyruvate carboxylase (1003 aa).

Positions 1–24 (MIMTVSDPGGSSMSSSSAITPESE) are disordered. Active-site residues include H190 and K646.

The protein belongs to the PEPCase type 1 family. Mg(2+) is required as a cofactor.

The enzyme catalyses oxaloacetate + phosphate = phosphoenolpyruvate + hydrogencarbonate. Functionally, forms oxaloacetate, a four-carbon dicarboxylic acid source for the tricarboxylic acid cycle. The polypeptide is Phosphoenolpyruvate carboxylase (Synechococcus sp. (strain WH7803)).